The sequence spans 81 residues: uncharacterized protein (81 aa).

2 helical membrane-spanning segments follow: residues 27–47 (ASLL…LNLT) and 54–74 (IFGA…IFIM).

It is found in the cell membrane. This is an uncharacterized protein from Bacillus subtilis (strain 168).